The primary structure comprises 396 residues: Elongation factor Tu (396 aa).

The tr-type G domain maps to 10 to 206; sequence KPHINVGTIG…ALDSYIPEPQ (197 aa). The interval 19–26 is G1; that stretch reads GHVDHGKT. 19–26 is a GTP binding site; that stretch reads GHVDHGKT. T26 is a binding site for Mg(2+). The tract at residues 60 to 64 is G2; sequence GITIN. The interval 81–84 is G3; the sequence is DCPG. GTP is bound by residues 81 to 85 and 136 to 139; these read DCPGH and NKAD. A G4 region spans residues 136-139; sequence NKAD. The segment at 174–176 is G5; it reads SAL.

It belongs to the TRAFAC class translation factor GTPase superfamily. Classic translation factor GTPase family. EF-Tu/EF-1A subfamily. Monomer.

The protein localises to the cytoplasm. It carries out the reaction GTP + H2O = GDP + phosphate + H(+). In terms of biological role, GTP hydrolase that promotes the GTP-dependent binding of aminoacyl-tRNA to the A-site of ribosomes during protein biosynthesis. This is Elongation factor Tu from Nitrosospira multiformis (strain ATCC 25196 / NCIMB 11849 / C 71).